A 494-amino-acid polypeptide reads, in one-letter code: Cytochrome P450 2A13 (494 aa).

Asn-297 contacts substrate. Cys-439 is a heme binding site.

Belongs to the cytochrome P450 family. Requires heme as cofactor. Expressed in liver and a number of extrahepatic tissues, including nasal mucosa, lung, trachea, brain, mammary gland, prostate, testis, and uterus, but not in heart, kidney, bone marrow, colon, small intestine, spleen, stomach, thymus, or skeletal muscle.

It is found in the endoplasmic reticulum membrane. The protein resides in the microsome membrane. The enzyme catalyses an organic molecule + reduced [NADPH--hemoprotein reductase] + O2 = an alcohol + oxidized [NADPH--hemoprotein reductase] + H2O + H(+). Functionally, exhibits a coumarin 7-hydroxylase activity. Active in the metabolic activation of hexamethylphosphoramide, N,N-dimethylaniline, 2'-methoxyacetophenone, N-nitrosomethylphenylamine, and the tobacco-specific carcinogen, 4-(methylnitrosamino)-1-(3-pyridyl)-1-butanone. Possesses phenacetin O-deethylation activity. The sequence is that of Cytochrome P450 2A13 (CYP2A13) from Homo sapiens (Human).